The sequence spans 654 residues: Hemagglutinin-esterase-fusion glycoprotein (654 aa).

An N-terminal signal peptide occupies residues 1–14 (MFFSLLLMLGLTEA). The tract at residues 15–40 (EKIKICLQKQVNSSFSLHNGFGGNLY) is fusion domain-1. At 15 to 629 (EKIKICLQKQ…QSDPFYWGSS (615 aa)) the chain is on the extracellular side. 4 disulfides stabilise this stretch: cysteine 20-cysteine 582, cysteine 209-cysteine 251, cysteine 228-cysteine 315, and cysteine 236-cysteine 288. 2 N-linked (GlcNAc...) asparagine; by host glycosylation sites follow: asparagine 26 and asparagine 61. Residues 41–157 (ATEEKRMFEL…KLNFQKSIYE (117 aa)) are esterase domain-1. Serine 71 (nucleophile) is an active-site residue. N-linked (GlcNAc...) asparagine; by host glycosylation is found at asparagine 143 and asparagine 188. The tract at residues 157 to 309 (ELASQSHCMS…VRSSPRFLLM (153 aa)) is N-acetyl-9-O-acetylneuraminic acid binding. An esterase domain-2 region spans residues 309–363 (MPERSYCFDMKEKGPVTAVQSIWGKGRKSDYAVDQACLSTPGCMLIQKQKPYIGE). Positions 364–654 (ADDHHGDQEM…ISGIAICRTK (291 aa)) are fusion domain-2. Active-site charge relay system residues include aspartate 365 and histidine 368. 3 N-linked (GlcNAc...) asparagine; by host glycosylation sites follow: asparagine 394, asparagine 551, and asparagine 602. A helical transmembrane segment spans residues 630–650 (LGLAITAANLMAALVISGIAI). Residues 651-654 (CRTK) lie on the Cytoplasmic side of the membrane.

It belongs to the influenza viruses hemagglutinin family. In terms of assembly, homotrimer of disulfide-linked HEF1-HEF2. In terms of processing, in natural infection, inactive HEF is matured into HEF1 and HEF2 outside the cell by one or more trypsin-like, arginine-specific endoprotease.

The protein resides in the virion membrane. The protein localises to the host cell membrane. The enzyme catalyses N-acetyl-9-O-acetylneuraminate + H2O = N-acetylneuraminate + acetate + H(+). It catalyses the reaction N-acetyl-4-O-acetylneuraminate + H2O = N-acetylneuraminate + acetate + H(+). In terms of biological role, binds to the N-acetyl-9-O-acetylneuraminic acid residues on the cell surface, bringing about the attachment of the virus particle to the cell. Plays a major role in the determination of host range restriction and virulence. Class I viral fusion protein. Responsible for penetration of the virus into the cell cytoplasm by mediating the fusion of the membrane of the endocytosed virus particle with the endosomal membrane. Low pH in endosomes induce an irreversible conformational change in HEF2, releasing the fusion hydrophobic peptide. Several trimers are required to form a competent fusion pore. Displays a receptor-destroying activity which is a neuraminidate-O-acetyl esterase. This activity cleaves off any receptor on the cell surface, which would otherwise prevent virions release. These cleavages prevent self-aggregation and ensure the efficient spread of the progeny virus from cell to cell. The sequence is that of Hemagglutinin-esterase-fusion glycoprotein from Influenza C virus (strain C/California/1978).